Reading from the N-terminus, the 1241-residue chain is MEALKTLLIANRGEIAVRVLKTAKKLNIRTIAVYTEPDAASTHVHLADEAILLSGPPSKAYIDGDQIIDIAKRKGADAIIPGYGFLSENSNFARDVASAGLAFVGPSPESIEAFGLKHTARELATKAGVPIVPGSQGLVTSEDEAVKIAQSLGFPVMLKATAGGGGMGLLTCNTEKEVRESFQTVQSRGEALFKNAGLFIERYYPSSHHIEVQVFGNGQGKAISIGERECSIQRRHQKVIEECPSPFVTRNPELRKGLCDAAVRLAESIDYGSAGTIEYLVDDESGKFFFLEMNTRLQVEHGITELCYGVDLVELMLRQADAQLSGRKGLEAEFLSSIPVGAPQGFAIEARVYAENPVRDFAPCPGILQDVDWKETTGSRIDTWVYRGIKVSANYDPLLAKVMYHASSRQKAIEGLRDILTGSRICGPPTNLGFLAEILANKDFNAGNTLTKFLNNFEYNLAAIDVISGGAYTLIQDWPGRPTVGRGFCHSGPMDSVAFRIANALVGNPVGLEGLEITLSGPELRFLGPAVISLCGAPIDAKLDEAPVPMWSRVKVSAGQRLKIGKTTGGGCRAYLAVLGGFPNIAEWFGSKATAPMVGVGGYQGRQLTSGDYLTISAQIPESDNELSLPEHLIPQYPDSWELMSMPGPYDEGYLAPESIDMLYNAEWTISHNAARGGIRLLGPKPTWARPDGGEGGAHPSNLIECGYAIGSINWTGDDPVIFPQDAPDLGGFVSSHTIVKADLWKLGQVKAGDKLKFRATSLKDTLLARNELERFISDIVQCCQKGEDFGSITPLASSLPPAMSSSTRVSGIVHQIPEKGNQPLVSYRQAGDDYLLIDYGVGAFDLNHRYRVTALKKVLSEAAGDISVSNGLINLVGCGNYLPKALMIYYDGTKIPQQKLIDYLCTIETQLGDLSRAKVPSRRFKLPLTFESKRQTDAIKRYMETQRPYASYLPDNIDFVARNNAFTRAELENIYLTASFMVITVGFFTALPIALPVDPRQRMNCPKMNPSRVFTPAGQVSWGGSCLAIYTVDSPGGYQMNGMTIPGVDILGTKRGYAPEKPWLFEDFDQITFYKVTEEEYERQLALFQSGRYEYEWEVVEFDMAEHNRLLKETKEEVKAIRARQRKAQAEMDLLEKELLERWAKEKAERGVSMDTVEELLKDPEITVIEAPLNANVWKVEVKEGDKLDKDQVVVILEAMKLEIAVRAESAAAGAVVEKILAQPGKSIEAGKPLMLVRRG.

In terms of domain architecture, Biotin carboxylation spans 3–459 (ALKTLLIANR…LTKFLNNFEY (457 aa)). Lysine 117 and glutamate 201 together coordinate ATP. Residues 121 to 321 (RELATKAGVP…LVELMLRQAD (201 aa)) enclose the ATP-grasp domain. One can recognise a Biotinyl-binding domain in the interval 1159–1239 (EELLKDPEIT…EAGKPLMLVR (81 aa)). Position 1202 is an N6-biotinyllysine (lysine 1202).

Biotin serves as cofactor.

It carries out the reaction urea + hydrogencarbonate + ATP = urea-1-carboxylate + ADP + phosphate + H(+). In terms of biological role, involved in the utilization of lactams. Required for the conversion of exogenous 2-pyrrolidinone (gamma-butyrolactam) to endogenous gamma-amino-n-butyrate (GABA). The chain is Putative urea carboxylase (lamA) from Emericella nidulans (strain FGSC A4 / ATCC 38163 / CBS 112.46 / NRRL 194 / M139) (Aspergillus nidulans).